The chain runs to 218 residues: 3-dehydroquinate dehydratase (218 aa).

Residues 29–31 and arginine 56 each bind 3-dehydroquinate; that span reads EFR. Histidine 116 (proton donor/acceptor) is an active-site residue. Lysine 142 serves as the catalytic Schiff-base intermediate with substrate. 3-dehydroquinate is bound by residues arginine 180, serine 200, and glutamine 204.

This sequence belongs to the type-I 3-dehydroquinase family. In terms of assembly, homodimer.

The catalysed reaction is 3-dehydroquinate = 3-dehydroshikimate + H2O. It functions in the pathway metabolic intermediate biosynthesis; chorismate biosynthesis; chorismate from D-erythrose 4-phosphate and phosphoenolpyruvate: step 3/7. Functionally, involved in the third step of the chorismate pathway, which leads to the biosynthesis of aromatic amino acids. Catalyzes the cis-dehydration of 3-dehydroquinate (DHQ) and introduces the first double bond of the aromatic ring to yield 3-dehydroshikimate. In Methanococcus maripaludis (strain DSM 14266 / JCM 13030 / NBRC 101832 / S2 / LL), this protein is 3-dehydroquinate dehydratase.